The sequence spans 316 residues: Acetyl-coenzyme A carboxylase carboxyl transferase subunit alpha (316 aa).

The CoA carboxyltransferase C-terminal domain occupies 39–293; the sequence is KLEEKNAQLT…KKHLQANLTN (255 aa).

This sequence belongs to the AccA family. In terms of assembly, acetyl-CoA carboxylase is a heterohexamer composed of biotin carboxyl carrier protein (AccB), biotin carboxylase (AccC) and two subunits each of ACCase subunit alpha (AccA) and ACCase subunit beta (AccD).

Its subcellular location is the cytoplasm. The catalysed reaction is N(6)-carboxybiotinyl-L-lysyl-[protein] + acetyl-CoA = N(6)-biotinyl-L-lysyl-[protein] + malonyl-CoA. It participates in lipid metabolism; malonyl-CoA biosynthesis; malonyl-CoA from acetyl-CoA: step 1/1. Its function is as follows. Component of the acetyl coenzyme A carboxylase (ACC) complex. First, biotin carboxylase catalyzes the carboxylation of biotin on its carrier protein (BCCP) and then the CO(2) group is transferred by the carboxyltransferase to acetyl-CoA to form malonyl-CoA. The polypeptide is Acetyl-coenzyme A carboxylase carboxyl transferase subunit alpha (Coxiella burnetii (strain RSA 331 / Henzerling II)).